A 603-amino-acid polypeptide reads, in one-letter code: MKISDKLLHPDWKEKVTYSYEFFPPKTSTGVQNLYNRIDRMKTWGRPMFVDVTWGAGGTSSELTPGIVNVIQTDFEVDTCMHLTCTNMSTEMIDAALKRAHETGCRNILALRGDPVKDTDWTEGESGFRYASDLVRYIRTHYNDEFCIGVAGYPEGYSPDDDIDESIKHLKLKVDEGADFIVTQMFYDVDNFIAWVDKVRAAGINIPIFPGIMPIQAWDSFIRRAKWSGVKIPQHFMDTLVPVKDDDEGVRERGVELIVEMCRKLIASGITRLHFYTMNLEKAVKMIIERLGLLDENLAPIVDTNNVELTNASSQDRRINEGVRPIFWRTRNESYVSRTDQWDELPHGRWGDSRSPAFGEFDAIRYGLRMSPKEITTSWGSPKSYSEIGDLFARYCEKKISSLPWSDLPISDEADLIRDQLLSMNRNAFLTINSQPALNGEKSSHPVFGWGPPNGYVFQKPYVEFFVHPSLLNELKETVKKLNSVSYFVTNKNGDLDTNSQYEIPNAVTWGVFPNREIIQPTIVESTSFLAWKDEAYSLGMEWANAYSPDSISRKLLVSMMKEWFLCVIVDNDFQNGQSLFDVFNKMRSLKDIHPELYYANAS.

Glu21 (proton donor/acceptor) is an active-site residue. NAD(+) is bound by residues 21 to 26 (EFFPPK) and 53 to 54 (TW). FAD contacts are provided by residues 53–54 (TW), His82, 112–114 (RGD), 130–131 (YA), Tyr153, and Lys173. Asp114 contacts substrate. Positions 184 and 276 each coordinate substrate. Ser355 carries the post-translational modification Phosphoserine.

This sequence belongs to the methylenetetrahydrofolate reductase family. The cofactor is FAD.

The enzyme catalyses (6S)-5-methyl-5,6,7,8-tetrahydrofolate + NADP(+) = (6R)-5,10-methylene-5,6,7,8-tetrahydrofolate + NADPH + H(+). It carries out the reaction (6S)-5-methyl-5,6,7,8-tetrahydrofolate + NAD(+) = (6R)-5,10-methylene-5,6,7,8-tetrahydrofolate + NADH + H(+). It participates in one-carbon metabolism; tetrahydrofolate interconversion. In terms of biological role, major methylenetetrahydrofolate reductase required to generate the methyl groups necessary for methionine synthetase to convert homocysteine to methionine. Performs 80 to 85 percent of the total methylenetetrahydrofolate reductase activity of the cells. The sequence is that of Methylenetetrahydrofolate reductase 1 (met9) from Schizosaccharomyces pombe (strain 972 / ATCC 24843) (Fission yeast).